Consider the following 384-residue polypeptide: L-lactate dehydrogenase (384 aa).

In terms of domain architecture, FMN hydroxy acid dehydrogenase spans 1 to 380; the sequence is MIISSSNDYR…NESCLVEMNK (380 aa). Substrate is bound at residue Tyr-24. Ser-106 and Gln-127 together coordinate FMN. Position 129 (Tyr-129) interacts with substrate. Position 155 (Thr-155) interacts with FMN. Arg-164 is a binding site for substrate. Residue Lys-251 coordinates FMN. The active-site Proton acceptor is the His-275. Position 278 (Arg-278) interacts with substrate. 306 to 330 is an FMN binding site; sequence DSGIRNGLDVVRMLALGADSVMLGR.

The protein belongs to the FMN-dependent alpha-hydroxy acid dehydrogenase family. Requires FMN as cofactor.

It localises to the cell inner membrane. It catalyses the reaction (S)-lactate + A = pyruvate + AH2. Functionally, catalyzes the conversion of L-lactate to pyruvate. Is coupled to the respiratory chain. The protein is L-lactate dehydrogenase of Acinetobacter baylyi (strain ATCC 33305 / BD413 / ADP1).